The following is a 147-amino-acid chain: SPI-1 type 3 secretion system pilotin (147 aa).

The N-terminal stretch at 1 to 15 (MKKFYSCLPVFLLIG) is a signal peptide. Cys16 carries N-palmitoyl cysteine lipidation. A lipid anchor (S-diacylglycerol cysteine) is attached at Cys16.

It belongs to the InvH family.

It is found in the cell outer membrane. Its function is as follows. Involved in the synthesis of the type III secretion system (T3SS), also called injectisome, which is used to inject bacterial effector proteins into eukaryotic host cells. Pilot protein that is required for the proper localization of the secretin InvG/SctC in the outer membrane. Necessary for efficient adherence and entry of these organisms into cultured epithelial cells. The protein is SPI-1 type 3 secretion system pilotin of Salmonella choleraesuis (strain SC-B67).